The primary structure comprises 406 residues: Enoyl-[acyl-carrier-protein] reductase [NADH] (406 aa).

NAD(+)-binding positions include 48-53 (GASTGF), 74-75 (FE), 111-112 (DA), and 140-141 (IA). Tyr-226 lines the substrate pocket. The Proton donor role is filled by Tyr-236. Residues Lys-245 and 275–277 (LVT) each bind NAD(+).

This sequence belongs to the TER reductase family. In terms of assembly, monomer.

It catalyses the reaction a 2,3-saturated acyl-[ACP] + NAD(+) = a (2E)-enoyl-[ACP] + NADH + H(+). It functions in the pathway lipid metabolism; fatty acid biosynthesis. Involved in the final reduction of the elongation cycle of fatty acid synthesis (FAS II). Catalyzes the reduction of a carbon-carbon double bond in an enoyl moiety that is covalently linked to an acyl carrier protein (ACP). The polypeptide is Enoyl-[acyl-carrier-protein] reductase [NADH] (Coxiella burnetii (strain RSA 331 / Henzerling II)).